The chain runs to 457 residues: Chromosomal replication initiator protein DnaA (457 aa).

The domain I, interacts with DnaA modulators stretch occupies residues 1–90; the sequence is MDTNNNIEKE…HSVDVRIEVA (90 aa). Positions 91–112 are domain II; that stretch reads PKIQINAQSNINYKAIKTSVKD. Positions 113-323 are domain III, AAA+ region; the sequence is SYTFENFVVG…GAIIKISVNA (211 aa). ATP contacts are provided by Gly-153, Gly-155, Lys-156, and Thr-157. The interval 324–457 is domain IV, binds dsDNA; that stretch reads NLMNASIDLN…DKKTAFNSSE (134 aa).

The protein belongs to the DnaA family. In terms of assembly, oligomerizes as a right-handed, spiral filament on DNA at oriC. Interacts via domain I with HobA. In a crystal with domains I and II of DnaA HobA forms tetramers with DnaA fragments bound at the dimer interface of the tetramer.

It localises to the cytoplasm. The protein resides in the cell inner membrane. Functionally, plays an essential role in the initiation and regulation of chromosomal replication. ATP-DnaA binds to the origin of replication (oriC) to initiate formation of the DNA replication initiation complex once per cell cycle. Binds the DnaA box (a 9 base pair repeat at the origin) and separates the double-stranded (ds)DNA. Forms a right-handed helical filament on oriC DNA; dsDNA binds to the exterior of the filament while single-stranded (ss)DNA is stabiized in the filament's interior. The ATP-DnaA-oriC complex binds and stabilizes one strand of the AT-rich DNA unwinding element (DUE), permitting loading of DNA polymerase. After initiation quickly degrades to an ADP-DnaA complex that is not apt for DNA replication. Binds acidic phospholipids. The DnaA box is 5'-TTATC[CA]A[CA]A-3' in this bacterium cycle. Multiple discrete DnaA-oriC complexes can be seen as DnaA levels increase. Binding of DnaA to oriC is increased by HobA; some chi-type structures can be seen by electron microscopy. Strand separation requires the DnaA boxes and adjacent DnaA-trio motifs but works equally well with ADP or ATP. This chain is Chromosomal replication initiator protein DnaA, found in Helicobacter pylori (strain ATCC 700392 / 26695) (Campylobacter pylori).